Here is a 457-residue protein sequence, read N- to C-terminus: MVSSLASNIILALVVVLMTLLRQNKPLQRWFVSYVEKLLSRKSNLAQKVSVLSPSLKLVDVEKSISADQSNLSKINYQIPTLPDLTGNLIRLHEYRARGEGYNGLLFRRARQLNGISEDQLQKLGYFTKLMKNNEGIRENARVIDKIIEFTLGKLIHSNEHDEEFTEEIEKICAEHGYKIKDGHLIQLNPDFVFPIVSSRGSQSVVHEALAHLCRDFSSYYSVERDPLQNFIISRINHHVISAGDMKEKILIVTPGAGVGGLSHTLATTFPKIQVDSIELSALMYICNLFALEYKHDVKIRPFVQQYSCQTVFDNQLRSLSADLSKVGHRSNLDPLWGDFTRYSPISKDYDKIIICSAYFIDTAENMFEYLSSIEALKKYCKELHWVNVGPLKYGTKPLVQFTGDELSRLRKIRGWKDLVEEYEVDSSKGLNGYLTDYESMYQGYYGLLKFHSVFES.

The next 2 membrane-spanning stretches (helical) occupy residues 1 to 21 (MVSS…MTLL) and 250 to 270 (ILIV…ATTF).

The protein localises to the membrane. This is an uncharacterized protein from Saccharomyces cerevisiae (strain ATCC 204508 / S288c) (Baker's yeast).